A 186-amino-acid chain; its full sequence is Adenylyl-sulfate kinase (186 aa).

ATP is bound at residue 17-24; it reads GLSGAGKT. Ser-91 serves as the catalytic Phosphoserine intermediate.

This sequence belongs to the APS kinase family.

It carries out the reaction adenosine 5'-phosphosulfate + ATP = 3'-phosphoadenylyl sulfate + ADP + H(+). The protein operates within sulfur metabolism; hydrogen sulfide biosynthesis; sulfite from sulfate: step 2/3. Catalyzes the synthesis of activated sulfate. This chain is Adenylyl-sulfate kinase, found in Chloroflexus aurantiacus (strain ATCC 29364 / DSM 637 / Y-400-fl).